Consider the following 134-residue polypeptide: Profilin-1 (134 aa).

Cys-13 and Cys-118 are oxidised to a cystine. Positions Ala-84–Thr-100 match the Involved in PIP2 interaction motif. The residue at position 114 (Thr-114) is a Phosphothreonine.

It belongs to the profilin family. As to quaternary structure, occurs in many kinds of cells as a complex with monomeric actin in a 1:1 ratio. Post-translationally, phosphorylated by MAP kinases.

The protein localises to the cytoplasm. It is found in the cytoskeleton. Functionally, binds to actin and affects the structure of the cytoskeleton. At high concentrations, profilin prevents the polymerization of actin, whereas it enhances it at low concentrations. This chain is Profilin-1, found in Olea europaea (Common olive).